The chain runs to 322 residues: Quinolinate synthase (322 aa).

Residues His-38 and Ser-55 each contribute to the iminosuccinate site. Cys-100 provides a ligand contact to [4Fe-4S] cluster. Iminosuccinate-binding positions include 126-128 (YIN) and Ser-143. Cys-186 contributes to the [4Fe-4S] cluster binding site. Iminosuccinate contacts are provided by residues 212–214 (HPE) and Thr-229. Residue Cys-279 participates in [4Fe-4S] cluster binding.

This sequence belongs to the quinolinate synthase family. Type 2 subfamily. It depends on [4Fe-4S] cluster as a cofactor.

It localises to the cytoplasm. It carries out the reaction iminosuccinate + dihydroxyacetone phosphate = quinolinate + phosphate + 2 H2O + H(+). The protein operates within cofactor biosynthesis; NAD(+) biosynthesis; quinolinate from iminoaspartate: step 1/1. Its function is as follows. Catalyzes the condensation of iminoaspartate with dihydroxyacetone phosphate to form quinolinate. This is Quinolinate synthase from Aquifex aeolicus (strain VF5).